The following is a 426-amino-acid chain: Citrate synthase (426 aa).

Residues His314 and Asp372 contribute to the active site.

It belongs to the citrate synthase family.

It carries out the reaction oxaloacetate + acetyl-CoA + H2O = citrate + CoA + H(+). Its pathway is carbohydrate metabolism; tricarboxylic acid cycle; isocitrate from oxaloacetate: step 1/2. The sequence is that of Citrate synthase (gltA) from Helicobacter pylori (strain J99 / ATCC 700824) (Campylobacter pylori J99).